Consider the following 487-residue polypeptide: 3-octaprenyl-4-hydroxybenzoate carboxy-lyase (487 aa).

Residue N172 participates in Mn(2+) binding. Prenylated FMN-binding positions include 175–177 (IYR), 189–191 (RWL), and 194–195 (RG). E238 contacts Mn(2+). The Proton donor role is filled by D287.

It belongs to the UbiD family. As to quaternary structure, homohexamer. It depends on prenylated FMN as a cofactor. Mn(2+) serves as cofactor.

The protein resides in the cell membrane. The enzyme catalyses a 4-hydroxy-3-(all-trans-polyprenyl)benzoate + H(+) = a 2-(all-trans-polyprenyl)phenol + CO2. It participates in cofactor biosynthesis; ubiquinone biosynthesis. In terms of biological role, catalyzes the decarboxylation of 3-octaprenyl-4-hydroxy benzoate to 2-octaprenylphenol, an intermediate step in ubiquinone biosynthesis. This chain is 3-octaprenyl-4-hydroxybenzoate carboxy-lyase, found in Nitrosomonas eutropha (strain DSM 101675 / C91 / Nm57).